Reading from the N-terminus, the 566-residue chain is Proline--tRNA ligase (566 aa).

This sequence belongs to the class-II aminoacyl-tRNA synthetase family. ProS type 1 subfamily. As to quaternary structure, homodimer.

The protein resides in the cytoplasm. It catalyses the reaction tRNA(Pro) + L-proline + ATP = L-prolyl-tRNA(Pro) + AMP + diphosphate. In terms of biological role, catalyzes the attachment of proline to tRNA(Pro) in a two-step reaction: proline is first activated by ATP to form Pro-AMP and then transferred to the acceptor end of tRNA(Pro). As ProRS can inadvertently accommodate and process non-cognate amino acids such as alanine and cysteine, to avoid such errors it has two additional distinct editing activities against alanine. One activity is designated as 'pretransfer' editing and involves the tRNA(Pro)-independent hydrolysis of activated Ala-AMP. The other activity is designated 'posttransfer' editing and involves deacylation of mischarged Ala-tRNA(Pro). The misacylated Cys-tRNA(Pro) is not edited by ProRS. In Bacillus anthracis (strain A0248), this protein is Proline--tRNA ligase.